Consider the following 178-residue polypeptide: Large ribosomal subunit protein uL6 (178 aa).

Belongs to the universal ribosomal protein uL6 family. Part of the 50S ribosomal subunit.

Its function is as follows. This protein binds to the 23S rRNA, and is important in its secondary structure. It is located near the subunit interface in the base of the L7/L12 stalk, and near the tRNA binding site of the peptidyltransferase center. This is Large ribosomal subunit protein uL6 from Leuconostoc mesenteroides subsp. mesenteroides (strain ATCC 8293 / DSM 20343 / BCRC 11652 / CCM 1803 / JCM 6124 / NCDO 523 / NBRC 100496 / NCIMB 8023 / NCTC 12954 / NRRL B-1118 / 37Y).